Reading from the N-terminus, the 259-residue chain is Polycomb group RING finger protein 1 (259 aa).

The RING-type zinc-finger motif lies at 45-84 (CYLCAGYFIDATTITECLHTFCKSCIVKYLQTSKYCPLCN).

In terms of assembly, component of a PRC1-like complex.

It localises to the nucleus. Its function is as follows. Component of a Polycomb group (PcG) multiprotein PRC1-like complex, a complex class required to maintain the transcriptionally repressive state of many genes, including Hox genes, throughout development. PcG PRC1 complex acts via chromatin remodeling and modification of histones; it mediates monoubiquitination of histone H2A 'Lys-119', rendering chromatin heritably changed in its expressibility. In Xenopus tropicalis (Western clawed frog), this protein is Polycomb group RING finger protein 1 (pcgf1).